The sequence spans 546 residues: CTP synthase (546 aa).

Positions 1 to 269 (MRSKKTKFIF…DERLAEVLNI (269 aa)) are amidoligase domain. CTP is bound at residue serine 17. Serine 17 serves as a coordination point for UTP. ATP contacts are provided by residues 18 to 23 (SLGKGL) and aspartate 75. The Mg(2+) site is built by aspartate 75 and glutamate 143. CTP-binding positions include 150–152 (DIE), 190–195 (KTKPTQ), and lysine 226. UTP is bound by residues 190–195 (KTKPTQ) and lysine 226. Residues 295-537 (RIAIVGKYVN…IRAALAQRDA (243 aa)) enclose the Glutamine amidotransferase type-1 domain. Glycine 357 lines the L-glutamine pocket. The active-site Nucleophile; for glutamine hydrolysis is the cysteine 384. Residues 385-388 (LGLQ), glutamate 408, and arginine 465 contribute to the L-glutamine site. Catalysis depends on residues histidine 510 and glutamate 512.

This sequence belongs to the CTP synthase family. Homotetramer.

The enzyme catalyses UTP + L-glutamine + ATP + H2O = CTP + L-glutamate + ADP + phosphate + 2 H(+). It carries out the reaction L-glutamine + H2O = L-glutamate + NH4(+). It catalyses the reaction UTP + NH4(+) + ATP = CTP + ADP + phosphate + 2 H(+). Its pathway is pyrimidine metabolism; CTP biosynthesis via de novo pathway; CTP from UDP: step 2/2. With respect to regulation, allosterically activated by GTP, when glutamine is the substrate; GTP has no effect on the reaction when ammonia is the substrate. The allosteric effector GTP functions by stabilizing the protein conformation that binds the tetrahedral intermediate(s) formed during glutamine hydrolysis. Inhibited by the product CTP, via allosteric rather than competitive inhibition. Catalyzes the ATP-dependent amination of UTP to CTP with either L-glutamine or ammonia as the source of nitrogen. Regulates intracellular CTP levels through interactions with the four ribonucleotide triphosphates. The sequence is that of CTP synthase from Myxococcus xanthus (strain DK1622).